We begin with the raw amino-acid sequence, 374 residues long: Acetylxylan esterase (374 aa).

The N-terminal stretch at 1-22 is a signal peptide; sequence MVFSPRLSAFVALVALTNAATA. The CBM1 domain maps to 23–57; it reads VPMYGQCGGSGYTGPTQCDPGLVCVKLNDWYSQCQ. The tract at residues 58-99 is ser/Thr/Pro-rich linker; it reads SGGAQPPVTTTSSPPVTVSPPPSTTTVAPPVATGPPAPEIPA. The disordered stretch occupies residues 60–86; that stretch reads GAQPPVTTTSSPPVTVSPPPSTTTVAP. Low complexity predominate over residues 63 to 73; sequence PPVTTTSSPPV. The tract at residues 100 to 374 is catalytic; the sequence is GQLTQLRSFG…EVVAMDFFGL (275 aa). Asn-114 carries N-linked (GlcNAc...) asparagine glycosylation. Residue Ser-219 is the Charge relay system of the active site. Asn-320 carries N-linked (GlcNAc...) asparagine glycosylation.

This sequence belongs to the carbohydrate esterase 1 (CE1) family. AxeA subfamily. As to quaternary structure, monomer. Post-translationally, glycosylated.

The protein localises to the secreted. It catalyses the reaction Deacetylation of xylans and xylo-oligosaccharides.. It participates in glycan degradation; xylan degradation. Functionally, acetylxylan esterase involved in the hydrolysis of xylan, a major structural heterogeneous polysaccharide found in plant biomass representing the second most abundant polysaccharide in the biosphere, after cellulose. Degrades acetylated xylans by cleaving acetyl side groups from the hetero-xylan backbone. The polypeptide is Acetylxylan esterase (Coprinopsis cinerea (strain Okayama-7 / 130 / ATCC MYA-4618 / FGSC 9003) (Inky cap fungus)).